The chain runs to 160 residues: Ureidoglycolate lyase (160 aa).

Belongs to the ureidoglycolate lyase family. As to quaternary structure, homodimer. It depends on Ni(2+) as a cofactor.

It carries out the reaction (S)-ureidoglycolate = urea + glyoxylate. The protein operates within nitrogen metabolism; (S)-allantoin degradation. Catalyzes the catabolism of the allantoin degradation intermediate (S)-ureidoglycolate, generating urea and glyoxylate. Involved in the anaerobic utilization of allantoin as sole nitrogen source. Reinforces the induction of genes involved in the degradation of allantoin and glyoxylate by producing glyoxylate. This is Ureidoglycolate lyase from Shigella flexneri serotype 5b (strain 8401).